The primary structure comprises 417 residues: Gamma-glutamyl phosphate reductase (417 aa).

This sequence belongs to the gamma-glutamyl phosphate reductase family.

The protein localises to the cytoplasm. It catalyses the reaction L-glutamate 5-semialdehyde + phosphate + NADP(+) = L-glutamyl 5-phosphate + NADPH + H(+). It participates in amino-acid biosynthesis; L-proline biosynthesis; L-glutamate 5-semialdehyde from L-glutamate: step 2/2. Functionally, catalyzes the NADPH-dependent reduction of L-glutamate 5-phosphate into L-glutamate 5-semialdehyde and phosphate. The product spontaneously undergoes cyclization to form 1-pyrroline-5-carboxylate. The polypeptide is Gamma-glutamyl phosphate reductase (Phocaeicola vulgatus (strain ATCC 8482 / DSM 1447 / JCM 5826 / CCUG 4940 / NBRC 14291 / NCTC 11154) (Bacteroides vulgatus)).